A 147-amino-acid chain; its full sequence is Nucleoside diphosphate kinase (147 aa).

Positions 9, 57, 85, 91, 102, and 112 each coordinate ATP. The Pros-phosphohistidine intermediate role is filled by H115.

Belongs to the NDK family. As to quaternary structure, homotetramer. The cofactor is Mg(2+).

It is found in the cytoplasm. The enzyme catalyses a 2'-deoxyribonucleoside 5'-diphosphate + ATP = a 2'-deoxyribonucleoside 5'-triphosphate + ADP. It catalyses the reaction a ribonucleoside 5'-diphosphate + ATP = a ribonucleoside 5'-triphosphate + ADP. Its function is as follows. Major role in the synthesis of nucleoside triphosphates other than ATP. The ATP gamma phosphate is transferred to the NDP beta phosphate via a ping-pong mechanism, using a phosphorylated active-site intermediate. The protein is Nucleoside diphosphate kinase of Listeria innocua serovar 6a (strain ATCC BAA-680 / CLIP 11262).